The chain runs to 379 residues: Chaperone protein DnaJ (379 aa).

The J domain maps to 5-69 (DYYEVLGISK…NKRATIDQFG (65 aa)). Residues 136 to 218 (GTTKEISIRK…CHGKGTENKT (83 aa)) form a CR-type zinc finger. 8 residues coordinate Zn(2+): C149, C152, C166, C169, C192, C195, C206, and C209. 4 CXXCXGXG motif repeats span residues 149-156 (CETCHGDG), 166-173 (CSYCNGAG), 192-199 (CPKCNGSG), and 206-213 (CPTCHGKG).

The protein belongs to the DnaJ family. As to quaternary structure, homodimer. The cofactor is Zn(2+).

The protein localises to the cytoplasm. In terms of biological role, participates actively in the response to hyperosmotic and heat shock by preventing the aggregation of stress-denatured proteins and by disaggregating proteins, also in an autonomous, DnaK-independent fashion. Unfolded proteins bind initially to DnaJ; upon interaction with the DnaJ-bound protein, DnaK hydrolyzes its bound ATP, resulting in the formation of a stable complex. GrpE releases ADP from DnaK; ATP binding to DnaK triggers the release of the substrate protein, thus completing the reaction cycle. Several rounds of ATP-dependent interactions between DnaJ, DnaK and GrpE are required for fully efficient folding. Also involved, together with DnaK and GrpE, in the DNA replication of plasmids through activation of initiation proteins. The protein is Chaperone protein DnaJ of Staphylococcus aureus.